A 138-amino-acid polypeptide reads, in one-letter code: MRALWIVAVLLLGVEGSLLQFRKMIKKMTGKEPVVSYAFYGCYCGSGGRGKPKDATDRCCFVHDCCYEKLTGCDPKWDDYTYSWKNGTIVCGGDDPCKKEVCECDKAAAICFRDNLKTYKKRYMTYPNILCSSKSEKC.

The N-terminal stretch at 1 to 16 (MRALWIVAVLLLGVEG) is a signal peptide. 7 disulfides stabilise this stretch: cysteine 42/cysteine 131, cysteine 44/cysteine 60, cysteine 59/cysteine 111, cysteine 65/cysteine 138, cysteine 66/cysteine 104, cysteine 73/cysteine 97, and cysteine 91/cysteine 102. Ca(2+)-binding residues include tyrosine 43, glycine 45, and glycine 47. Histidine 63 is an active-site residue. Aspartate 64 lines the Ca(2+) pocket. The active site involves aspartate 105.

This sequence belongs to the phospholipase A2 family. Group II subfamily. D49 sub-subfamily. The cofactor is Ca(2+). In terms of tissue distribution, expressed by the venom gland.

The protein localises to the secreted. The catalysed reaction is a 1,2-diacyl-sn-glycero-3-phosphocholine + H2O = a 1-acyl-sn-glycero-3-phosphocholine + a fatty acid + H(+). Its function is as follows. Snake venom phospholipase A2 (PLA2) that shows potent hemolytic activity, and exhibits medium anticoagulant effects by binding to factor Xa (F10) and inhibiting the prothrombinase activity (IC(50) is 90 nM). It is one of the few phospholipases A2 capable of hydrolyzing the phospholipids of E.coli membranes in the presence of a bactericidal/permeability-increasing protein (BPI) of neutrophils. PLA2 catalyzes the calcium-dependent hydrolysis of the 2-acyl groups in 3-sn-phosphoglycerides. The polypeptide is Basic phospholipase A2 B (Gloydius halys (Chinese water mocassin)).